Reading from the N-terminus, the 432-residue chain is Adenylosuccinate synthetase (432 aa).

GTP is bound by residues 12–18 (GDEGKGK) and 40–42 (GHT). The active-site Proton acceptor is Asp-13. Mg(2+) is bound by residues Asp-13 and Gly-40. IMP-binding positions include 13-16 (DEGK), 38-41 (NAGH), Thr-129, Arg-143, Gln-224, Thr-239, and Arg-303. The Proton donor role is filled by His-41. Position 299 to 305 (299 to 305 (VTTGRRR)) interacts with substrate. GTP-binding positions include Arg-305, 331–333 (KLD), and 413–415 (GVG).

The protein belongs to the adenylosuccinate synthetase family. As to quaternary structure, homodimer. It depends on Mg(2+) as a cofactor.

The protein localises to the cytoplasm. The enzyme catalyses IMP + L-aspartate + GTP = N(6)-(1,2-dicarboxyethyl)-AMP + GDP + phosphate + 2 H(+). It participates in purine metabolism; AMP biosynthesis via de novo pathway; AMP from IMP: step 1/2. In terms of biological role, plays an important role in the de novo pathway of purine nucleotide biosynthesis. Catalyzes the first committed step in the biosynthesis of AMP from IMP. The chain is Adenylosuccinate synthetase from Mycobacterium leprae (strain TN).